The sequence spans 391 residues: Protein NirF (391 aa).

The protein localises to the cytoplasm. Functionally, required for the biosynthesis of heme d1 of nitrite reductase. Could have a dehydrogenase activity yielding sirohydrochlorin from precorrin-2 or dehydrogenation of propionate side chain C17. In Stutzerimonas stutzeri (Pseudomonas stutzeri), this protein is Protein NirF (nirF).